The chain runs to 101 residues: Small ribosomal subunit protein bS18c (101 aa).

Belongs to the bacterial ribosomal protein bS18 family. As to quaternary structure, part of the 30S ribosomal subunit.

The protein localises to the plastid. It localises to the chloroplast. The protein is Small ribosomal subunit protein bS18c of Eucalyptus globulus subsp. globulus (Tasmanian blue gum).